A 434-amino-acid polypeptide reads, in one-letter code: 26S proteasome regulatory subunit 6A (434 aa).

Alanine 2 is modified (N-acetylalanine). Residue tyrosine 180 is modified to Phosphotyrosine. 222–229 lines the ATP pocket; that stretch reads GPPGTGKT.

Belongs to the AAA ATPase family. In terms of processing, N-acetylated by NAT1.

It is found in the cytoplasm. Its subcellular location is the nucleus. Its function is as follows. The 26S proteasome is involved in the ATP-dependent degradation of ubiquitinated proteins. The regulatory (or ATPase) complex confers ATP dependency and substrate specificity to the 26S complex. The polypeptide is 26S proteasome regulatory subunit 6A (RPT5) (Saccharomyces cerevisiae (strain ATCC 204508 / S288c) (Baker's yeast)).